The sequence spans 299 residues: MLHCITTIFLSISRMTMEDGPIAESYFTAYADVCFREFGNHVKFWTTINEANVFTIGGYNDGTSPPGRCSNCSSGNSSTETYIVGHNLLLAHASVSRLYQQKYKDKQGGSVGFSLYAFEFIPQTSSSKDDEIAIQRAKDFFYGWILGPLTFGDYPDEMKRAVGSRLPIFSKEESEQVKGSSDFIGIMHYFPALVENIKLKPSLSRNTDFYSDMGVSLTYLGNFSGFGYDVFPWAMESVLEYIKQTYGNPPVYILENGTPMKPDLELQQKDTRRIEYLQAYIGAVLKAVRNGSDTRGYFV.

The N-terminal stretch at 1 to 16 (MLHCITTIFLSISRMT) is a signal peptide. 49-50 (NE) is a binding site for a beta-D-glucoside. The active-site Proton donor is the E50. C69 and C72 form a disulfide bridge. 2 N-linked (GlcNAc...) asparagine glycosylation sites follow: N71 and N76. Y189 provides a ligand contact to a beta-D-glucoside. N222 carries N-linked (GlcNAc...) asparagine glycosylation. E255 contacts a beta-D-glucoside. E255 functions as the Nucleophile in the catalytic mechanism. N290 is a glycosylation site (N-linked (GlcNAc...) asparagine).

Belongs to the glycosyl hydrolase 1 family.

The catalysed reaction is Hydrolysis of terminal, non-reducing beta-D-glucosyl residues with release of beta-D-glucose.. This is Putative beta-glucosidase 2 from Arabidopsis thaliana (Mouse-ear cress).